A 251-amino-acid polypeptide reads, in one-letter code: 5'-nucleotidase SurE (251 aa).

A divalent metal cation is bound by residues Asp-8, Asp-9, Ser-39, and Asn-90.

Belongs to the SurE nucleotidase family. The cofactor is a divalent metal cation.

The protein resides in the cytoplasm. It catalyses the reaction a ribonucleoside 5'-phosphate + H2O = a ribonucleoside + phosphate. Nucleotidase that shows phosphatase activity on nucleoside 5'-monophosphates. In Colwellia psychrerythraea (strain 34H / ATCC BAA-681) (Vibrio psychroerythus), this protein is 5'-nucleotidase SurE.